We begin with the raw amino-acid sequence, 90 residues long: Small ribosomal subunit protein uS15c (90 aa).

The protein belongs to the universal ribosomal protein uS15 family. In terms of assembly, part of the 30S ribosomal subunit.

Its subcellular location is the plastid. The protein localises to the chloroplast. This chain is Small ribosomal subunit protein uS15c (rps15), found in Morus indica (Mulberry).